The following is a 247-amino-acid chain: Carboxy-S-adenosyl-L-methionine synthase (247 aa).

S-adenosyl-L-methionine-binding positions include Tyr-40, 65–67 (GCS), 90–91 (DN), 122–123 (DI), Asn-137, and Arg-204.

Belongs to the class I-like SAM-binding methyltransferase superfamily. Cx-SAM synthase family. In terms of assembly, homodimer.

The enzyme catalyses prephenate + S-adenosyl-L-methionine = carboxy-S-adenosyl-L-methionine + 3-phenylpyruvate + H2O. Catalyzes the conversion of S-adenosyl-L-methionine (SAM) to carboxy-S-adenosyl-L-methionine (Cx-SAM). In Stutzerimonas stutzeri (strain A1501) (Pseudomonas stutzeri), this protein is Carboxy-S-adenosyl-L-methionine synthase.